The sequence spans 391 residues: Phosphoglycerate kinase (391 aa).

Substrate contacts are provided by residues 21 to 23 (DLN), R36, 59 to 62 (HLGR), R113, and R146. ATP-binding positions include K197, E319, and 345–348 (GGDT).

It belongs to the phosphoglycerate kinase family. In terms of assembly, monomer.

Its subcellular location is the cytoplasm. The enzyme catalyses (2R)-3-phosphoglycerate + ATP = (2R)-3-phospho-glyceroyl phosphate + ADP. The protein operates within carbohydrate degradation; glycolysis; pyruvate from D-glyceraldehyde 3-phosphate: step 2/5. The protein is Phosphoglycerate kinase of Shewanella woodyi (strain ATCC 51908 / MS32).